Here is a 156-residue protein sequence, read N- to C-terminus: Small ribosomal subunit protein uS7 (156 aa).

This sequence belongs to the universal ribosomal protein uS7 family. In terms of assembly, part of the 30S ribosomal subunit. Contacts proteins S9 and S11.

Functionally, one of the primary rRNA binding proteins, it binds directly to 16S rRNA where it nucleates assembly of the head domain of the 30S subunit. Is located at the subunit interface close to the decoding center, probably blocks exit of the E-site tRNA. The sequence is that of Small ribosomal subunit protein uS7 from Lactobacillus delbrueckii subsp. bulgaricus (strain ATCC 11842 / DSM 20081 / BCRC 10696 / JCM 1002 / NBRC 13953 / NCIMB 11778 / NCTC 12712 / WDCM 00102 / Lb 14).